Here is a 62-residue protein sequence, read N- to C-terminus: Large ribosomal subunit protein eL24 (62 aa).

Zn(2+) is bound by residues C6, C9, C32, and C36. The C4-type zinc finger occupies C6–C36.

The protein belongs to the eukaryotic ribosomal protein eL24 family. Part of the 50S ribosomal subunit. Forms a cluster with proteins L3 and L14. Requires Zn(2+) as cofactor.

Its function is as follows. Binds to the 23S rRNA. This chain is Large ribosomal subunit protein eL24, found in Methanosarcina acetivorans (strain ATCC 35395 / DSM 2834 / JCM 12185 / C2A).